The following is a 147-amino-acid chain: F420H(2)-dependent reductase Rv1155 (147 aa).

Coenzyme F420-(gamma-Glu)n is bound by residues Q32, Q37, S50, 56–60, 77–79, and H138; these read AKTRN and WSY.

It belongs to the F420H(2)-dependent biliverdin reductase family. As to quaternary structure, homodimer.

Its function is as follows. F420H(2)-dependent reductase able to catalyze the reduction of biliverdin-IXalpha to bilirubin-IXalpha in vitro. However, kinetic parameters show that it is less efficient than the biliverdin reductase Rv2074 and suggest biliverdin-IXalpha is unlikely to be the native substrate of Rv1155, which probably catalyzes the reduction of an alternative molecule in vivo. Binds coenzyme F420, but does not bind FMN or other flavins. Cannot use pyridoxine 5'-phosphate, pyridoxamine 5'-phosphate, pyridoxal 5'-phosphate (PLP), the anti-tuberculosis drug PA-824 or aflatoxin analogs as substrates. The sequence is that of F420H(2)-dependent reductase Rv1155 from Mycobacterium tuberculosis (strain ATCC 25618 / H37Rv).